The chain runs to 230 residues: Heptaprenylglyceryl phosphate synthase (230 aa).

Lys12 contacts sn-glycerol 1-phosphate. Asp14 and Thr40 together coordinate Mg(2+). Sn-glycerol 1-phosphate is bound by residues 159 to 164, Gly189, and 209 to 210; these read YVEYSG and GD.

Belongs to the GGGP/HepGP synthase family. Group I subfamily. Homodimer. Requires Mg(2+) as cofactor.

The enzyme catalyses sn-glycerol 1-phosphate + all-trans-heptaprenyl diphosphate = 3-heptaprenyl-sn-glycero-1-phosphate + diphosphate. It functions in the pathway membrane lipid metabolism; glycerophospholipid metabolism. Its function is as follows. Prenyltransferase that catalyzes in vivo the transfer of the heptaprenyl moiety of heptaprenyl pyrophosphate (HepPP; 35 carbon atoms) to the C3 hydroxyl of sn-glycerol-1-phosphate (G1P), producing heptaprenylglyceryl phosphate (HepGP). This reaction is an ether-bond-formation step in the biosynthesis of archaea-type G1P-based membrane lipids found in Bacillales. In Staphylococcus epidermidis (strain ATCC 35984 / DSM 28319 / BCRC 17069 / CCUG 31568 / BM 3577 / RP62A), this protein is Heptaprenylglyceryl phosphate synthase.